The primary structure comprises 208 residues: UPF0711 protein C18orf21 homolog (208 aa).

Residues 123-137 are compositionally biased toward basic residues; that stretch reads SKHKSTPGSASKHRT. Disordered regions lie at residues 123-180 and 189-208; these read SKHK…KSSP and MLEN…LSSL. Polar residues predominate over residues 138-152; the sequence is PQTVNWATPKSVANR. Over residues 153 to 180 the composition is skewed to low complexity; that stretch reads TPSSTPRSASSNTSSSSSSKSSSVKSSP.

This sequence belongs to the UPF0711 family.

The sequence is that of UPF0711 protein C18orf21 homolog from Danio rerio (Zebrafish).